A 307-amino-acid chain; its full sequence is MFQFVKKKNEFLKFARLGSRAFTQNAQKTHSKGSNIALVSSSLLSVGMIALYYNVYGPSLSAGTPKEEGLHFIQHDWPQSKVLSGFDHASLRRGFQVYREVCSACHSLNLIAWRHLVGVTHTADEAKQMASEVEYEDGPDDEGNMFKRPGKLSDFLPPPYPNVEAARASNNGAAPPDLSCVVRGRHGGQDYIYSLLTGYTEPPAGVEVPDGMNFNPFFPGTQIAMARPLFDDAVEFEDGTPATTAQAAKDVVNFLHWASEPELDIRKKMGFQVITVLTILTALSMWYKRFKWTPIKNRKIFYQRPIK.

Residues 1-56 (MFQFVKKKNEFLKFARLGSRAFTQNAQKTHSKGSNIALVSSSLLSVGMIALYYNVY) constitute a mitochondrion transit peptide. At 57 to 269 (GPSLSAGTPK…EPELDIRKKM (213 aa)) the chain is on the mitochondrial intermembrane side. A Cytochrome c domain is found at 89 to 259 (ASLRRGFQVY…DVVNFLHWAS (171 aa)). 4 residues coordinate heme c: Cys102, Cys105, His106, and Met225. A helical membrane pass occupies residues 270-287 (GFQVITVLTILTALSMWY). Residues 288 to 307 (KRFKWTPIKNRKIFYQRPIK) lie on the Mitochondrial matrix side of the membrane.

It belongs to the cytochrome c family. In terms of assembly, component of the ubiquinol-cytochrome c oxidoreductase (cytochrome b-c1 complex, complex III, CIII), a multisubunit enzyme composed of 3 respiratory subunits cytochrome b, cytochrome c1 and Rieske protein, 2 core protein subunits, and additional low-molecular weight protein subunits. The complex exists as an obligatory dimer and forms supercomplexes (SCs) in the inner mitochondrial membrane with cytochrome c oxidase (complex IV, CIV). Heme c is required as a cofactor.

It localises to the mitochondrion inner membrane. The catalysed reaction is a quinol + 2 Fe(III)-[cytochrome c](out) = a quinone + 2 Fe(II)-[cytochrome c](out) + 2 H(+)(out). Functionally, component of the ubiquinol-cytochrome c oxidoreductase, a multisubunit transmembrane complex that is part of the mitochondrial electron transport chain which drives oxidative phosphorylation. The respiratory chain contains 3 multisubunit complexes succinate dehydrogenase (complex II, CII), ubiquinol-cytochrome c oxidoreductase (cytochrome b-c1 complex, complex III, CIII) and cytochrome c oxidase (complex IV, CIV), that cooperate to transfer electrons derived from NADH and succinate to molecular oxygen, creating an electrochemical gradient over the inner membrane that drives transmembrane transport and the ATP synthase. The cytochrome b-c1 complex catalyzes electron transfer from ubiquinol to cytochrome c, linking this redox reaction to translocation of protons across the mitochondrial inner membrane, with protons being carried across the membrane as hydrogens on the quinol. In the process called Q cycle, 2 protons are consumed from the matrix, 4 protons are released into the intermembrane space and 2 electrons are passed to cytochrome c. Cytochrome c1 is a catalytic core subunit containing a c-type heme. It transfers electrons from the [2Fe-2S] iron-sulfur cluster of the Rieske protein to cytochrome c. The protein is Cytochrome c1, heme protein, mitochondrial (cyt1) of Schizosaccharomyces pombe (strain 972 / ATCC 24843) (Fission yeast).